The chain runs to 62 residues: Small acidic protein 1 (62 aa).

As to quaternary structure, interacts with the COP9 signalosome. As to expression, expressed in roots, flowers, siliques, stems, leaves and seeds. In flowers, detected in petals, anthers and pistils.

In terms of biological role, mediates responses to the synthetic auxin 2,4-dichlorophenoxyacetic acid (2,4-D). Not involved in the response to indole-3-acetic acid (IAA). Interacts with RUB modification-related components and may regulate the cullin-ring ubiquitin E3 ligase complex (CRL) activity. The sequence is that of Small acidic protein 1 (SMAP1) from Arabidopsis thaliana (Mouse-ear cress).